Reading from the N-terminus, the 273-residue chain is Polyamine aminopropyltransferase (273 aa).

The 234-residue stretch at 5 to 238 (ENWFSERYSD…GFWSFTVASP (234 aa)) folds into the PABS domain. Residue Gln34 participates in S-methyl-5'-thioadenosine binding. Spermidine is bound by residues His65 and Asp90. Residues Glu109 and 140 to 141 (DG) contribute to the S-methyl-5'-thioadenosine site. Asp158 functions as the Proton acceptor in the catalytic mechanism. A spermidine-binding site is contributed by 158-161 (DSTD). Pro165 lines the S-methyl-5'-thioadenosine pocket.

The protein belongs to the spermidine/spermine synthase family. In terms of assembly, homodimer or homotetramer.

The protein localises to the cytoplasm. It catalyses the reaction S-adenosyl 3-(methylsulfanyl)propylamine + putrescine = S-methyl-5'-thioadenosine + spermidine + H(+). It participates in amine and polyamine biosynthesis; spermidine biosynthesis; spermidine from putrescine: step 1/1. In terms of biological role, catalyzes the irreversible transfer of a propylamine group from the amino donor S-adenosylmethioninamine (decarboxy-AdoMet) to putrescine (1,4-diaminobutane) to yield spermidine. This Thermoplasma acidophilum (strain ATCC 25905 / DSM 1728 / JCM 9062 / NBRC 15155 / AMRC-C165) protein is Polyamine aminopropyltransferase.